We begin with the raw amino-acid sequence, 355 residues long: Elongation factor Ts (355 aa).

The segment at 82–85 (TDFV) is involved in Mg(2+) ion dislocation from EF-Tu.

Belongs to the EF-Ts family.

It is found in the cytoplasm. Associates with the EF-Tu.GDP complex and induces the exchange of GDP to GTP. It remains bound to the aminoacyl-tRNA.EF-Tu.GTP complex up to the GTP hydrolysis stage on the ribosome. In Helicobacter hepaticus (strain ATCC 51449 / 3B1), this protein is Elongation factor Ts.